We begin with the raw amino-acid sequence, 34 residues long: Photosystem II reaction center protein Psb30 (34 aa).

Residues 6-26 form a helical membrane-spanning segment; sequence VIGQLVSTGLIGLLGPAVIIL.

Belongs to the Psb30/Ycf12 family. In terms of assembly, PSII is composed of 1 copy each of membrane proteins PsbA, PsbB, PsbC, PsbD, PsbE, PsbF, PsbH, PsbI, PsbJ, PsbK, PsbL, PsbM, PsbT, PsbX, PsbY, PsbZ, Psb30/Ycf12, peripheral proteins of the oxygen-evolving complex and a large number of cofactors. It forms dimeric complexes.

Its subcellular location is the plastid. The protein resides in the chloroplast thylakoid membrane. In terms of biological role, a core subunit of photosystem II (PSII), probably helps stabilize the reaction center. In Skeletonema costatum (Marine centric diatom), this protein is Photosystem II reaction center protein Psb30.